A 139-amino-acid polypeptide reads, in one-letter code: Ribulose bisphosphate carboxylase small subunit (139 aa).

It belongs to the RuBisCO small chain family. Heterohexadecamer of 8 large and 8 small subunits.

It localises to the plastid. The protein resides in the chloroplast. RuBisCO catalyzes two reactions: the carboxylation of D-ribulose 1,5-bisphosphate, the primary event in carbon dioxide fixation, as well as the oxidative fragmentation of the pentose substrate in the photorespiration process. Both reactions occur simultaneously and in competition at the same active site. Although the small subunit is not catalytic it is essential for maximal activity. The polypeptide is Ribulose bisphosphate carboxylase small subunit (Guillardia theta (Cryptophyte)).